Reading from the N-terminus, the 163-residue chain is 6,7-dimethyl-8-ribityllumazine synthase (163 aa).

5-amino-6-(D-ribitylamino)uracil is bound by residues F27, 58–60 (ALE), and 87–89 (CVV). 92-93 (DT) is a (2S)-2-hydroxy-3-oxobutyl phosphate binding site. The Proton donor role is filled by H95. N120 is a 5-amino-6-(D-ribitylamino)uracil binding site. Residue R134 coordinates (2S)-2-hydroxy-3-oxobutyl phosphate.

Belongs to the DMRL synthase family.

It carries out the reaction (2S)-2-hydroxy-3-oxobutyl phosphate + 5-amino-6-(D-ribitylamino)uracil = 6,7-dimethyl-8-(1-D-ribityl)lumazine + phosphate + 2 H2O + H(+). It functions in the pathway cofactor biosynthesis; riboflavin biosynthesis; riboflavin from 2-hydroxy-3-oxobutyl phosphate and 5-amino-6-(D-ribitylamino)uracil: step 1/2. Its function is as follows. Catalyzes the formation of 6,7-dimethyl-8-ribityllumazine by condensation of 5-amino-6-(D-ribitylamino)uracil with 3,4-dihydroxy-2-butanone 4-phosphate. This is the penultimate step in the biosynthesis of riboflavin. The sequence is that of 6,7-dimethyl-8-ribityllumazine synthase from Rhodopseudomonas palustris (strain BisA53).